We begin with the raw amino-acid sequence, 103 residues long: Large ribosomal subunit protein uL24 (103 aa).

This sequence belongs to the universal ribosomal protein uL24 family. In terms of assembly, part of the 50S ribosomal subunit.

In terms of biological role, one of two assembly initiator proteins, it binds directly to the 5'-end of the 23S rRNA, where it nucleates assembly of the 50S subunit. Its function is as follows. One of the proteins that surrounds the polypeptide exit tunnel on the outside of the subunit. In Brucella abortus (strain S19), this protein is Large ribosomal subunit protein uL24.